Reading from the N-terminus, the 212-residue chain is MGSCDRKALWALSFLLLLLGSSSVQGTWEAMLPVRLAEKSQAEEVAATGSRQPHADRCPPPPRTLPPGACQATRCQSDSECPRHRRCCYNGCAYACLEAVPPPPVLDWLVQPKPRWLGGNGWLLDGPEEVLQAEACSTTEDGAEPLLCPSGYECHILQPGDAAQGIPNHGRCVKQRRQAEGRVLRQKLHKEYPEGDSKYVAEPGKGQQRHFP.

The N-terminal stretch at 1–26 is a signal peptide; the sequence is MGSCDRKALWALSFLLLLLGSSSVQG. Positions 43 to 62 are disordered; the sequence is EEVAATGSRQPHADRCPPPP. One can recognise a WAP domain in the interval 51–100; the sequence is RQPHADRCPPPPRTLPPGACQATRCQSDSECPRHRRCCYNGCAYACLEAV. 4 disulfides stabilise this stretch: C58–C88, C70–C92, C75–C87, and C81–C96. Positions 191 to 212 are disordered; the sequence is EYPEGDSKYVAEPGKGQQRHFP.

Vascular smooth muscle and prostate. Periacinar ring.

Its subcellular location is the secreted. In terms of biological role, has growth inhibitory activity. The polypeptide is WAP four-disulfide core domain protein 1 (Wfdc1) (Rattus norvegicus (Rat)).